The sequence spans 516 residues: Beta-glucosidase 1 (516 aa).

The signal sequence occupies residues 1–21; it reads MGHRLVVVLLLALLVAGAARA. Q68 is a binding site for a beta-D-glucoside. Residue N96 is glycosylated (N-linked (GlcNAc...) asparagine). A beta-D-glucoside is bound by residues H169 and 214–215; that span reads NE. The Proton donor role is filled by E215. Cysteines 234 and 237 form a disulfide. N290 is a glycosylation site (N-linked (GlcNAc...) asparagine). Y353 serves as a coordination point for a beta-D-glucoside. Residue N364 is glycosylated (N-linked (GlcNAc...) asparagine). An a beta-D-glucoside-binding site is contributed by E424. Catalysis depends on E424, which acts as the Nucleophile. N-linked (GlcNAc...) asparagine glycosylation occurs at N432. A beta-D-glucoside-binding positions include W471, 478-479, and F487; that span reads EW.

Belongs to the glycosyl hydrolase 1 family.

It carries out the reaction Hydrolysis of terminal, non-reducing beta-D-glucosyl residues with release of beta-D-glucose.. The protein is Beta-glucosidase 1 (BGLU1) of Oryza sativa subsp. japonica (Rice).